Reading from the N-terminus, the 245-residue chain is Small ribosomal subunit protein uS2 (245 aa).

Belongs to the universal ribosomal protein uS2 family.

In Pseudomonas putida (strain W619), this protein is Small ribosomal subunit protein uS2.